Here is a 1370-residue protein sequence, read N- to C-terminus: Reverse gyrase 1 (1370 aa).

Residues alanine 6 to serine 47 form an RG N-terminal-type zinc finger. The Zn(2+) site is built by cysteine 16, cysteine 19, cysteine 34, and cysteine 37. Residues glutamine 95 and alanine 112 to threonine 119 each bind ATP. A Helicase ATP-binding domain is found at alanine 99–arginine 287. Residues aspartate 220–aspartate 223 carry the DEAD box motif. The interval glutamate 643 to glycine 1370 is topoisomerase I. Residues threonine 647 to valine 825 enclose the Toprim domain. Glutamate 653 contacts Mg(2+). The RG C-terminal-type zinc-finger motif lies at isoleucine 744–serine 772. The Zn(2+) site is built by cysteine 747, cysteine 750, cysteine 761, and cysteine 764. Aspartate 794 contacts Mg(2+). Positions aspartate 841 to alanine 1323 constitute a Topo IA-type catalytic domain. Tyrosine 1028 (O-(5'-phospho-DNA)-tyrosine intermediate) is an active-site residue.

It in the N-terminal section; belongs to the DEAD box helicase family. DDVD subfamily. This sequence in the C-terminal section; belongs to the type IA topoisomerase family. As to quaternary structure, monomer. Requires Zn(2+) as cofactor. It depends on Mg(2+) as a cofactor.

It is found in the cytoplasm. It catalyses the reaction ATP + H2O = ADP + phosphate + H(+). Functionally, modifies the topological state of DNA by introducing positive supercoils in an ATP-dependent process, increasing the linking number in steps of +1. Binds to single-stranded DNA, transiently cleaves and then rejoins the ends, introducing a positive supercoil in the process. The scissile phosphodiester is attacked by the catalytic tyrosine of the enzyme, resulting in the formation of a DNA-(5'-phosphotyrosyl)-enzyme intermediate. Probably involved in rewinding DNA strands in regions of the chromosome that have opened up to allow replication, transcription, DNA repair and/or for DNA protection. The chain is Reverse gyrase 1 from Aeropyrum pernix (strain ATCC 700893 / DSM 11879 / JCM 9820 / NBRC 100138 / K1).